A 92-amino-acid polypeptide reads, in one-letter code: Cell division protein FtsL (92 aa).

Topologically, residues 1–3 (MGR) are cytoplasmic. Residues 4–21 (ISLIVAALLMLSAISLVT) traverse the membrane as a helical segment. Residues 22–92 (SRYQSRQLFI…YMNQPAGGAQ (71 aa)) are Periplasmic-facing.

The protein belongs to the FtsL family. Part of a complex composed of FtsB, FtsL and FtsQ.

Its subcellular location is the cell inner membrane. Its function is as follows. Essential cell division protein. May link together the upstream cell division proteins, which are predominantly cytoplasmic, with the downstream cell division proteins, which are predominantly periplasmic. The protein is Cell division protein FtsL of Bordetella pertussis (strain Tohama I / ATCC BAA-589 / NCTC 13251).